A 172-amino-acid chain; its full sequence is Large ribosomal subunit protein uL10 (172 aa).

This sequence belongs to the universal ribosomal protein uL10 family. Part of the ribosomal stalk of the 50S ribosomal subunit. The N-terminus interacts with L11 and the large rRNA to form the base of the stalk. The C-terminus forms an elongated spine to which L12 dimers bind in a sequential fashion forming a multimeric L10(L12)X complex.

Forms part of the ribosomal stalk, playing a central role in the interaction of the ribosome with GTP-bound translation factors. The sequence is that of Large ribosomal subunit protein uL10 from Chlorobium limicola (strain DSM 245 / NBRC 103803 / 6330).